Reading from the N-terminus, the 428-residue chain is GTPase Obg (428 aa).

Residues 1-158 form the Obg domain; the sequence is MFVDQVKVYV…RDVILELKVL (158 aa). Residues 118-145 form a disordered region; that stretch reads KGGRGGRGNSRFATPANPAPQLSENGEP. The OBG-type G domain maps to 159-329; it reads ADVGLVGFPS…LLFEIANQLE (171 aa). Residues 165–172, 190–194, 212–215, 282–285, and 310–312 contribute to the GTP site; these read GFPSVGKS, FTTLV, DLPG, NKMD, and SAI. Positions 172 and 192 each coordinate Mg(2+). The region spanning 350 to 428 is the OCT domain; that stretch reads RFDEGDAPFE…LLEFEFEFID (79 aa).

This sequence belongs to the TRAFAC class OBG-HflX-like GTPase superfamily. OBG GTPase family. In terms of assembly, monomer. Mg(2+) is required as a cofactor.

The protein resides in the cytoplasm. In terms of biological role, an essential GTPase which binds GTP, GDP and possibly (p)ppGpp with moderate affinity, with high nucleotide exchange rates and a fairly low GTP hydrolysis rate. Plays a role in control of the cell cycle, stress response, ribosome biogenesis and in those bacteria that undergo differentiation, in morphogenesis control. The chain is GTPase Obg from Bacillus pumilus (strain SAFR-032).